We begin with the raw amino-acid sequence, 74 residues long: UPF0154 protein OB1676 (74 aa).

Residues 4–24 (IWVVLIAIAALVAGVALGFFI) form a helical membrane-spanning segment.

Belongs to the UPF0154 family.

The protein resides in the membrane. This chain is UPF0154 protein OB1676, found in Oceanobacillus iheyensis (strain DSM 14371 / CIP 107618 / JCM 11309 / KCTC 3954 / HTE831).